We begin with the raw amino-acid sequence, 370 residues long: MKIVVDENIPLADALFGDLGEIIRKPGREISSADVAEADALLVRSVTRVNADLLTGSKVKFVGTCTIGTDHLDKEFLAEAGIRFASAPGCNAQGVVQYDLAALAHLGYLARDIRVGIIGCGNVGGSLHRALTGMGVTCVCYDPFLTQDQNADLADWDALFTCDVICVHTPLTRSGPYPTHHMLSTPFFRAMRDGALLLNAGRGEVIDNRALKAYLQGDNSNHLSVVLDVWEGEPAIDAELAPLVKIATPHIAGYSFEGKTNGSLMIYEALAEFLGVNATERSARVAAVKAQAYGAAEPLDADDLVTAILATHPITRDDKALRDQLDQLPAGFDALRKGYPVRREFSHYQLTSAQIPANVTALGFSLDSAK.

Substrate-binding residues include serine 45 and threonine 66. NAD(+) contacts are provided by aspartate 142 and threonine 169. Arginine 202 is an active-site residue. NAD(+) is bound at residue aspartate 228. Glutamate 233 is an active-site residue. Residue histidine 250 is the Proton donor of the active site. Glycine 253 lines the NAD(+) pocket. Tyrosine 254 lines the substrate pocket.

The protein belongs to the D-isomer specific 2-hydroxyacid dehydrogenase family. PdxB subfamily. In terms of assembly, homodimer.

Its subcellular location is the cytoplasm. The catalysed reaction is 4-phospho-D-erythronate + NAD(+) = (R)-3-hydroxy-2-oxo-4-phosphooxybutanoate + NADH + H(+). Its pathway is cofactor biosynthesis; pyridoxine 5'-phosphate biosynthesis; pyridoxine 5'-phosphate from D-erythrose 4-phosphate: step 2/5. Functionally, catalyzes the oxidation of erythronate-4-phosphate to 3-hydroxy-2-oxo-4-phosphonooxybutanoate. This Teredinibacter turnerae (strain ATCC 39867 / T7901) protein is Erythronate-4-phosphate dehydrogenase.